The chain runs to 377 residues: Opsin-1 (377 aa).

Over 1–58 the chain is Extracellular; the sequence is MDPGPGLAALQAWAAKSPAYGAANQTVVDKVPPDMMHMIDPHWYQFPPMNPLWHALLG. N-linked (GlcNAc...) asparagine glycosylation is present at asparagine 24. Residues 59 to 79 traverse the membrane as a helical segment; it reads FTIGVLGFVSISGNGMVIYIF. Residues 80 to 92 lie on the Cytoplasmic side of the membrane; it reads MSTKSLKTPSNLL. A helical membrane pass occupies residues 93-113; the sequence is VVNLAFSDFLMMCAMSPAMVV. At 114 to 129 the chain is on the extracellular side; that stretch reads NCYYETWVWGPFACEL. The cysteines at positions 127 and 204 are disulfide-linked. Residues 130-150 traverse the membrane as a helical segment; sequence YACAGSLFGCASIWTMTMIAF. Residues 151–169 lie on the Cytoplasmic side of the membrane; that stretch reads DRYNVIVKGIAAKPMTSNG. The chain crosses the membrane as a helical span at residues 170–190; the sequence is ALLRILGIWVFSLAWTLLPFF. Residues 191–220 are Extracellular-facing; that stretch reads GWNRYVPEGNMTACGTDYLSKSWVSRSYIL. Asparagine 200 is a glycosylation site (N-linked (GlcNAc...) asparagine). Residues 221–241 traverse the membrane as a helical segment; sequence IYSVFVYFLPLLLIIYSYFFI. Residues 242–280 lie on the Cytoplasmic side of the membrane; it reads VQAVAAHEKAMREQAKKMNVASLRSSEAANTSAECKLAK. Residues 281-301 traverse the membrane as a helical segment; sequence VALMTISLWFMAWTPYLVINY. At 302 to 312 the chain is on the extracellular side; it reads TGVFESAPISP. The chain crosses the membrane as a helical span at residues 313–335; sequence LATIWGSLFAKANAVYNPIVYGI. Residues 336-377 lie on the Cytoplasmic side of the membrane; sequence SHPKYQAALYAKFPSLQCQSAPEDAGSVASGTTAVSEEKPAA. Positions 357–377 are disordered; sequence PEDAGSVASGTTAVSEEKPAA.

The protein belongs to the G-protein coupled receptor 1 family. Opsin subfamily. As to expression, in the retina, expression is abundant and uniform in the anterior-posterior and oblique cells of the retinulae, with some expression in the proximal cells. There is no expression in the dorsal rim retinulae (at protein level).

The protein resides in the cell projection. It is found in the rhabdomere membrane. Its function is as follows. Visual pigments are the light-absorbing molecules that mediate vision. They consist of an apoprotein, opsin, covalently linked to cis-retinal. May play a role in photoperiodic photoreception. In Manduca sexta (Tobacco hawkmoth), this protein is Opsin-1 (OP1).